The chain runs to 229 residues: DNA mismatch repair protein MutH (229 aa).

Belongs to the MutH family.

Its subcellular location is the cytoplasm. Functionally, sequence-specific endonuclease that cleaves unmethylated GATC sequences. It is involved in DNA mismatch repair. The protein is DNA mismatch repair protein MutH of Escherichia coli O45:K1 (strain S88 / ExPEC).